Reading from the N-terminus, the 166-residue chain is Testis-expressed protein 51 (166 aa).

Positions 1–15 are cleaved as a signal peptide; that stretch reads MLPLLIICLLPAIEG. Residues 138 to 154 form a helical membrane-spanning segment; sequence SLWAVSLSSALLLAIAG.

It is found in the membrane. The sequence is that of Testis-expressed protein 51 from Homo sapiens (Human).